We begin with the raw amino-acid sequence, 1304 residues long: TPR-containing protein DDB_G0280363 (1304 aa).

Disordered stretches follow at residues 19-85 (QQHH…HPQQ), 153-195 (NINN…NSSL), 296-334 (LPSTNSSIVSRQQQLQQQQQKLKLKSSPSPISPFFYTQQ), 447-477 (GFNWSPSLQPDQSTSTNHTQAMLQQQQQRQQ), 576-687 (QNQQ…VTTI), and 706-728 (LTTVNHSKPPPNESKRGELVESP). Composition is skewed to low complexity over residues 25–44 (QQNNTQVQQQQQQHTTQFNQ), 52–85 (HQQHQQQQHHQQQHHQQQQQQQQQQQQQQQHPQQ), and 153–194 (NINN…NNSS). Positions 296 to 306 (LPSTNSSIVSR) are enriched in polar residues. Positions 307-316 (QQQLQQQQQK) are enriched in low complexity. The span at 448–465 (FNWSPSLQPDQSTSTNHT) shows a compositional bias: polar residues. Composition is skewed to low complexity over residues 466–477 (QAMLQQQQQRQQ) and 576–597 (QNQQQNQQQNQQQNQQHYPNQH). A compositionally biased stretch (basic residues) spans 598–625 (HGQHQHNQHNQHHNQHHNQSHPNHKNQH). Residues 626–687 (QKQNQTQQST…NNNTNNVTTI (62 aa)) are compositionally biased toward low complexity. TPR repeat units lie at residues 769–802 (WRVYLELADLANRQNNLKLARKFYRKVTSTQPYI), 899–932 (MKHVPWYGPIYQEAYKLEERCEEYERAINIVEKG), 978–1011 (WKIYFEAAQIEERSKNLTLSRAAYVKSVELCPEN), 1046–1079 (SKLRSLVLLEYSRLEEYAGNINKSRRILKMAHVE), 1084–1111 (WKVFLESVLLEMRANNYEAAIKEAKESL), 1112–1150 (KIHSGAGRLWAALIQLNQLKGVKSQLNVFKKALQFVPKS), and 1152–1184 (EVWCEGARIALNNNELREARRFLEFAIQFTPQF).

This Dictyostelium discoideum (Social amoeba) protein is TPR-containing protein DDB_G0280363.